The following is a 604-amino-acid chain: Elongation factor 4 (604 aa).

The 183-residue stretch at 7–189 folds into the tr-type G domain; that stretch reads SRLRNFCIIA…AVVDRIPPPA (183 aa). GTP-binding positions include 19–24 and 136–139; these read DHGKST and NKID.

This sequence belongs to the TRAFAC class translation factor GTPase superfamily. Classic translation factor GTPase family. LepA subfamily.

The protein localises to the cell inner membrane. It carries out the reaction GTP + H2O = GDP + phosphate + H(+). In terms of biological role, required for accurate and efficient protein synthesis under certain stress conditions. May act as a fidelity factor of the translation reaction, by catalyzing a one-codon backward translocation of tRNAs on improperly translocated ribosomes. Back-translocation proceeds from a post-translocation (POST) complex to a pre-translocation (PRE) complex, thus giving elongation factor G a second chance to translocate the tRNAs correctly. Binds to ribosomes in a GTP-dependent manner. The chain is Elongation factor 4 from Prochlorococcus marinus (strain MIT 9303).